Here is a 229-residue protein sequence, read N- to C-terminus: Large ribosomal subunit protein uL1 (229 aa).

This sequence belongs to the universal ribosomal protein uL1 family. As to quaternary structure, part of the 50S ribosomal subunit.

Functionally, binds directly to 23S rRNA. The L1 stalk is quite mobile in the ribosome, and is involved in E site tRNA release. Protein L1 is also a translational repressor protein, it controls the translation of the L11 operon by binding to its mRNA. The protein is Large ribosomal subunit protein uL1 of Ureaplasma urealyticum serovar 10 (strain ATCC 33699 / Western).